The sequence spans 443 residues: Thymidine phosphorylase (443 aa).

It belongs to the thymidine/pyrimidine-nucleoside phosphorylase family. As to quaternary structure, homodimer.

It carries out the reaction thymidine + phosphate = 2-deoxy-alpha-D-ribose 1-phosphate + thymine. The protein operates within pyrimidine metabolism; dTMP biosynthesis via salvage pathway; dTMP from thymine: step 1/2. Its function is as follows. The enzymes which catalyze the reversible phosphorolysis of pyrimidine nucleosides are involved in the degradation of these compounds and in their utilization as carbon and energy sources, or in the rescue of pyrimidine bases for nucleotide synthesis. This chain is Thymidine phosphorylase, found in Shewanella halifaxensis (strain HAW-EB4).